Reading from the N-terminus, the 429-residue chain is Enolase (429 aa).

Q168 contacts (2R)-2-phosphoglycerate. E210 functions as the Proton donor in the catalytic mechanism. Mg(2+)-binding residues include D247, E288, and D315. (2R)-2-phosphoglycerate is bound by residues K340, R369, S370, and K391. Catalysis depends on K340, which acts as the Proton acceptor.

This sequence belongs to the enolase family. It depends on Mg(2+) as a cofactor.

The protein localises to the cytoplasm. It localises to the secreted. Its subcellular location is the cell surface. The enzyme catalyses (2R)-2-phosphoglycerate = phosphoenolpyruvate + H2O. Its pathway is carbohydrate degradation; glycolysis; pyruvate from D-glyceraldehyde 3-phosphate: step 4/5. In terms of biological role, catalyzes the reversible conversion of 2-phosphoglycerate (2-PG) into phosphoenolpyruvate (PEP). It is essential for the degradation of carbohydrates via glycolysis. The chain is Enolase from Trichormus variabilis (strain ATCC 29413 / PCC 7937) (Anabaena variabilis).